Reading from the N-terminus, the 108-residue chain is Urease subunit gamma (108 aa).

This sequence belongs to the urease gamma subunit family. In terms of assembly, heterotrimer of UreA (gamma), UreB (beta) and UreC (alpha) subunits. Three heterotrimers associate to form the active enzyme.

The protein resides in the cytoplasm. It catalyses the reaction urea + 2 H2O + H(+) = hydrogencarbonate + 2 NH4(+). The protein operates within nitrogen metabolism; urea degradation; CO(2) and NH(3) from urea (urease route): step 1/1. The protein is Urease subunit gamma of Trichodesmium erythraeum (strain IMS101).